The chain runs to 141 residues: Cystatin (141 aa).

Residues 1 to 26 form the signal peptide; sequence MVHSQLPVAGPLRLLCALLLLPSATM. Residues 29 to 129 enclose the Cystatin domain; the sequence is GGLSPRSVTD…CRFQVWSRPW (101 aa). Residues 73 to 77 carry the Secondary area of contact motif; it reads QVVSG. 2 cysteine pairs are disulfide-bonded: Cys-91–Cys-107 and Cys-120–Cys-140.

It belongs to the cystatin family. As to expression, expressed at a low level by the venom gland (at protein level).

Its subcellular location is the secreted. Functionally, inhibits various C1 cysteine proteases including cathepsin L, papain and cathepsin B. This protein has no toxic activity and its function in the venom is unknown. It may play a role as a housekeeping or regulatory protein. The protein is Cystatin of Pseudechis porphyriacus (Red-bellied black snake).